A 443-amino-acid polypeptide reads, in one-letter code: RILP-like protein homolog (443 aa).

The 89-residue stretch at 8-96 (EMGEMVLDAI…ESEKLEKAEF (89 aa)) folds into the RH1 domain. Positions 59-315 (LELLEALATK…TLNEQLAELK (257 aa)) form a coiled coil. One can recognise an RH2 domain in the interval 282 to 401 (RPRYTTRELK…KSSESGIRKF (120 aa)). The disordered stretch occupies residues 311-394 (LAELKPPSQA…PDDAPWKKSS (84 aa)). The span at 332–355 (DDSDEDDDGHVADNDDDDDEEEAA) shows a compositional bias: acidic residues. The span at 356-368 (AEANELEPPAAGE) shows a compositional bias: low complexity.

This sequence belongs to the RILPL family. As to quaternary structure, interacts with Arl8 (in GTP-bound form).

It is found in the lysosome membrane. Functionally, may have a role in lysosome distribution by interacting with Arl8. This is RILP-like protein homolog from Drosophila melanogaster (Fruit fly).